The sequence spans 531 residues: UDP-glucuronosyltransferase 1A3 (531 aa).

The signal sequence occupies residues 1–25; it reads MGIQGFLQKLSGLLLLLCALPWAEG. Residues N116, N139, N293, and N431 are each glycosylated (N-linked (GlcNAc...) asparagine). A helical transmembrane segment spans residues 489-505; the sequence is VIGFLLAIVLTVVFIVY.

Belongs to the UDP-glycosyltransferase family. In terms of assembly, homodimers. Homooligomer. Interacts with UGT1A1, UGT1A4, UGT1A6, UGT1A7, UGT1A8, UGT1A9 and UGT1A10 to form heterodimers.

The protein resides in the endoplasmic reticulum membrane. The catalysed reaction is glucuronate acceptor + UDP-alpha-D-glucuronate = acceptor beta-D-glucuronoside + UDP + H(+). It catalyses the reaction 17beta-estradiol + UDP-alpha-D-glucuronate = 17beta-estradiol 3-O-(beta-D-glucuronate) + UDP + H(+). The enzyme catalyses 17beta-estradiol + UDP-alpha-D-glucuronate = 17beta-estradiol 17-O-(beta-D-glucuronate) + UDP + H(+). It carries out the reaction 17alpha-estradiol + UDP-alpha-D-glucuronate = 17alpha-estradiol 3-O-(beta-D-glucuronate) + UDP + H(+). The catalysed reaction is estrone + UDP-alpha-D-glucuronate = estrone 3-O-(beta-D-glucuronate) + UDP + H(+). It catalyses the reaction chenodeoxycholate + UDP-alpha-D-glucuronate = chenodeoxycholoyl-24-O-(beta-D-glucuronate) + UDP. The enzyme catalyses deoxycholate + UDP-alpha-D-glucuronate = deoxycholoyl-24-O-(beta-D-glucuronate) + UDP. It carries out the reaction lithocholate + UDP-alpha-D-glucuronate = lithocholoyl-24-O-(beta-D-glucuronate) + UDP. The catalysed reaction is hyodeoxycholate + UDP-alpha-D-glucuronate = hyodeoxycholoyl-24-O-(beta-D-glucuronate) + UDP. It catalyses the reaction hyocholate + UDP-alpha-D-glucuronate = hyocholoyl-24-O-(beta-D-glucuronate) + UDP. The enzyme catalyses calcidiol + UDP-alpha-D-glucuronate = calcidiol 25-O-(beta-D-glucuronide) + UDP + H(+). It carries out the reaction losartan + UDP-alpha-D-glucuronate = losartan-2-N-beta-D-glucuronide + UDP. The catalysed reaction is candesartan + UDP-alpha-D-glucuronate = candesartan-2-N-beta-D-glucuronide + UDP. It catalyses the reaction zolasartan + UDP-alpha-D-glucuronate = zolarsartan-2-N-beta-D-glucuronide + UDP. The enzyme catalyses (E)-ferulate + UDP-alpha-D-glucuronate = (E)-4-O-(beta-D-glucuronosyl)-ferulate + UDP + H(+). It carries out the reaction (E)-ferulate + UDP-alpha-D-glucuronate = (E)-ferulic acid beta-D-glucuronate ester + UDP. In terms of biological role, UDP-glucuronosyltransferase (UGT) that catalyzes phase II biotransformation reactions in which lipophilic substrates are conjugated with glucuronic acid to increase the metabolite's water solubility, thereby facilitating excretion into either the urine or bile. Essential for the elimination and detoxification of drugs, xenobiotics and endogenous compounds. Catalyzes the glucuronidation of endogenous estrogen hormones such as estradiol and estrone. Contributes to bile acid (BA) detoxification by catalyzing the glucuronidation of BA substrates, which are natural detergents for dietary lipids absorption. Involved in the glucuronidation of calcidiol, which is the major circulating form of vitamin D3, essential for the regulation of calcium and phosphate homeostasis. Involved in the glucuronidation of the phytochemical ferulic acid at the phenolic or the carboxylic acid group. Involved in the glucuronidation of the AGTR1 angiotensin receptor antagonists losartan, candesartan and zolarsartan, which can inhibit the effect of angiotensin II. The chain is UDP-glucuronosyltransferase 1A3 from Rattus norvegicus (Rat).